The sequence spans 337 residues: C5a anaphylatoxin chemotactic receptor 2 (337 aa).

Topologically, residues 1 to 38 are extracellular; the sequence is MGNDSVSYEYGDYSDLSDRPVDCLDGACLAIDPLRVAP. N-linked (GlcNAc...) asparagine glycosylation occurs at Asn3. Residues 39-61 form a helical membrane-spanning segment; it reads LPLYAAIFLVGVPGNAMVAWVAG. At 62–72 the chain is on the cytoplasmic side; that stretch reads KVARRRVGATW. Residues 73 to 95 traverse the membrane as a helical segment; that stretch reads LLHLAVADLLCCLSLPILAVPIA. Residues 96–114 lie on the Extracellular side of the membrane; sequence RGGHWPYGAVGCRALPSII. A disulfide bridge connects residues Cys107 and Cys186. A helical transmembrane segment spans residues 115–137; it reads LLTMYASVLLLAALSADLCFLAL. The Cytoplasmic segment spans residues 138–149; the sequence is GPAWWSTVQRAC. Residues 150 to 172 form a helical membrane-spanning segment; that stretch reads GVQVACGAAWTLALLLTVPSAIY. Residues 173–202 lie on the Extracellular side of the membrane; that stretch reads RRLHQEHFPARLQCVVDYGGSSSTENAVTA. The chain crosses the membrane as a helical span at residues 203–225; sequence IRFLFGFLGPLVAVASCHSALLC. At 226–237 the chain is on the cytoplasmic side; the sequence is WAARRCRPLGTA. Residues 238-260 traverse the membrane as a helical segment; that stretch reads IVVGFFVCWAPYHLLGLVLTVAA. Over 261–274 the chain is Extracellular; sequence PNSALLARALRAEP. Residues 275 to 294 form a helical membrane-spanning segment; sequence LIVGLALAHSCLNPMLFLYF. At 295–337 the chain is on the cytoplasmic side; it reads GRAQLRRSLPAACHWALRESQGQDESVDSKKSTSHDLVSEMEV. Position 320 is a phosphoserine (Ser320).

The protein belongs to the G-protein coupled receptor 1 family. As to quaternary structure, interacts with C3 (the anaphylatoxin peptide C3a and the adipogenic hormone ASP); the interaction occurs with higher affinity for ASP, enhancing the phosphorylation and activation of GPR77, recruitment of ARRB2 to the cell surface and endocytosis of GRP77. Frontal cortex, hippocampus, hypothalamus, pons and liver.

It localises to the cell membrane. Functionally, receptor for the chemotactic and inflammatory C3a, C4a and C5a anaphylatoxin peptides and also for their dearginated forms ASP/C3adesArg, C4adesArg and C5adesArg respectively. Couples weakly to G(i)-mediated signaling pathways. The chain is C5a anaphylatoxin chemotactic receptor 2 (C5AR2) from Homo sapiens (Human).